Here is a 464-residue protein sequence, read N- to C-terminus: Glutamate--tRNA ligase 1 (464 aa).

Residues 8-18 carry the 'HIGH' region motif; the sequence is PSPTGHLHVGG. Positions 231–235 match the 'KMSKS' region motif; sequence PLSKR. K234 contacts ATP.

Belongs to the class-I aminoacyl-tRNA synthetase family. Glutamate--tRNA ligase type 1 subfamily. Monomer.

Its subcellular location is the cytoplasm. The catalysed reaction is tRNA(Glu) + L-glutamate + ATP = L-glutamyl-tRNA(Glu) + AMP + diphosphate. In terms of biological role, catalyzes the attachment of glutamate to tRNA(Glu) in a two-step reaction: glutamate is first activated by ATP to form Glu-AMP and then transferred to the acceptor end of tRNA(Glu). The sequence is that of Glutamate--tRNA ligase 1 from Thermotoga sp. (strain RQ2).